A 678-amino-acid polypeptide reads, in one-letter code: Glycine--tRNA ligase beta subunit (678 aa).

It belongs to the class-II aminoacyl-tRNA synthetase family. Tetramer of two alpha and two beta subunits.

It localises to the cytoplasm. It catalyses the reaction tRNA(Gly) + glycine + ATP = glycyl-tRNA(Gly) + AMP + diphosphate. This Streptococcus pneumoniae (strain Hungary19A-6) protein is Glycine--tRNA ligase beta subunit.